A 175-amino-acid polypeptide reads, in one-letter code: Ribosome maturation factor RimM (175 aa).

A PRC barrel domain is found at 96 to 175 (EGDYYWHDLI…TITVDWDAGF (80 aa)).

This sequence belongs to the RimM family. As to quaternary structure, binds ribosomal protein uS19.

The protein localises to the cytoplasm. An accessory protein needed during the final step in the assembly of 30S ribosomal subunit, possibly for assembly of the head region. Essential for efficient processing of 16S rRNA. May be needed both before and after RbfA during the maturation of 16S rRNA. It has affinity for free ribosomal 30S subunits but not for 70S ribosomes. The sequence is that of Ribosome maturation factor RimM from Actinobacillus pleuropneumoniae serotype 5b (strain L20).